The sequence spans 417 residues: Calreticulin (417 aa).

Positions 1 to 17 (MLLSVPLLLGLLGLAAA) are cleaved as a signal peptide. The tract at residues 18 to 197 (EPAVYFKEQF…NSQVESGSLE (180 aa)) is N-domain. Gln-26 contributes to the Ca(2+) binding site. Lys-48 is subject to N6-acetyllysine. Ca(2+)-binding residues include Lys-62 and Lys-64. A disulfide bridge links Cys-105 with Cys-137. 4 residues coordinate an alpha-D-glucoside: Tyr-109, Lys-111, Tyr-128, and Asp-135. Position 159 is an N6-acetyllysine (Lys-159). One copy of the 1-1 repeat lies at 191–202 (VESGSLEDDWDF). The tract at residues 191–255 (VESGSLEDDW…DAKKPEDWDE (65 aa)) is 4 X approximate repeats. Positions 193-278 (SGSLEDDWDF…PEYKGEWKPR (86 aa)) are disordered. The P-domain stretch occupies residues 198 to 308 (DDWDFLPPKK…YSPDPSIYAY (111 aa)). Positions 207-251 (KIKDPDASKPEDWDERAKIDDPTDSKPEDWDKPEHIPDPDAKKPE) are enriched in basic and acidic residues. Lys-209 is modified (N6-acetyllysine). Repeat copies occupy residues 210 to 221 (DPDASKPEDWDE), 227 to 238 (DPTDSKPEDWDK), 244 to 255 (DPDAKKPEDWDE), 259 to 269 (GEWEPPVIQNP), 273 to 283 (GEWKPRQIDNP), and 287 to 297 (GTWIHPEIDNP). Residues 237 to 270 (DKPEHIPDPDAKKPEDWDEEMDGEWEPPVIQNPE) are interaction with PPIB. Acidic residues predominate over residues 252–261 (DWDEEMDGEW). The 3 X approximate repeats stretch occupies residues 259-297 (GEWEPPVIQNPEYKGEWKPRQIDNPDYKGTWIHPEIDNP). The tract at residues 309–417 (DNFGVLGLDL…DVPGQAKDEL (109 aa)) is C-domain. Residue Asp-317 coordinates an alpha-D-glucoside. Asp-328 is a Ca(2+) binding site. Residues 350–417 (TKAAEKQMKD…DVPGQAKDEL (68 aa)) are disordered. Residues 352-379 (AAEKQMKDKQDEEQRLKEEEEDKKRKEE) are compositionally biased toward basic and acidic residues. Over residues 380-409 (EEAEDKEDDEDKDEDEEDEEDKEEDEEEDV) the composition is skewed to acidic residues. The Prevents secretion from ER signature appears at 414–417 (KDEL).

This sequence belongs to the calreticulin family. In terms of assembly, monomer. Component of an EIF2 complex at least composed of CELF1/CUGBP1, CALR, CALR3, EIF2S1, EIF2S2, HSP90B1 and HSPA5. Interacts with PDIA3/ERp57 and SPACA9. Interacts with TRIM21. Interacts with NR3C1. Interacts with PPIB. Interacts (via P-domain) with PDIA5. Interacts with GABARAP. Interacts with CLCC1.

It localises to the endoplasmic reticulum lumen. It is found in the cytoplasm. The protein resides in the cytosol. Its subcellular location is the secreted. The protein localises to the extracellular space. It localises to the extracellular matrix. It is found in the cell surface. The protein resides in the sarcoplasmic reticulum lumen. Its subcellular location is the cytoplasmic vesicle. The protein localises to the secretory vesicle. It localises to the cortical granule. It is found in the cytoplasmic granule. Its function is as follows. Calcium-binding chaperone that promotes folding, oligomeric assembly and quality control in the endoplasmic reticulum (ER) via the calreticulin/calnexin cycle. This lectin interacts transiently with almost all of the monoglucosylated glycoproteins that are synthesized in the ER. Interacts with the DNA-binding domain of NR3C1 and mediates its nuclear export. Involved in maternal gene expression regulation. May participate in oocyte maturation via the regulation of calcium homeostasis. In Chlorocebus aethiops (Green monkey), this protein is Calreticulin (CALR).